The primary structure comprises 289 residues: 1D-myo-inositol 2-acetamido-2-deoxy-alpha-D-glucopyranoside deacetylase 1 (289 aa).

Zn(2+) is bound by residues histidine 4, aspartate 7, and histidine 140.

The protein belongs to the MshB deacetylase family. It depends on Zn(2+) as a cofactor.

It catalyses the reaction 1D-myo-inositol 2-acetamido-2-deoxy-alpha-D-glucopyranoside + H2O = 1D-myo-inositol 2-amino-2-deoxy-alpha-D-glucopyranoside + acetate. In terms of biological role, catalyzes the deacetylation of 1D-myo-inositol 2-acetamido-2-deoxy-alpha-D-glucopyranoside (GlcNAc-Ins) in the mycothiol biosynthesis pathway. This is 1D-myo-inositol 2-acetamido-2-deoxy-alpha-D-glucopyranoside deacetylase 1 from Frankia alni (strain DSM 45986 / CECT 9034 / ACN14a).